The chain runs to 496 residues: Squalene epoxidase ERG1 (496 aa).

Topologically, residues methionine 1–threonine 16 are cytoplasmic. The chain crosses the membrane as a helical span at residues isoleucine 17–leucine 37. Residues valine 28 to isoleucine 29, glutamate 48 to arginine 49, arginine 56, and arginine 158 each bind FAD. The Lumenal segment spans residues alanine 38–glutamate 474. Glycyl lysine isopeptide (Lys-Gly) (interchain with G-Cter in ubiquitin) cross-links involve residues lysine 284, lysine 289, and lysine 311. Positions 335 and 348 each coordinate FAD. The chain crosses the membrane as a helical span at residues glycine 475 to isoleucine 495. Glycine 496 is a topological domain (cytoplasmic).

It belongs to the squalene monooxygenase family. As to quaternary structure, interacts with ERG28. FAD is required as a cofactor.

The protein resides in the microsome membrane. The protein localises to the endoplasmic reticulum membrane. It localises to the lipid droplet. It carries out the reaction squalene + reduced [NADPH--hemoprotein reductase] + O2 = (S)-2,3-epoxysqualene + oxidized [NADPH--hemoprotein reductase] + H2O + H(+). It participates in terpene metabolism; lanosterol biosynthesis; lanosterol from farnesyl diphosphate: step 2/3. With respect to regulation, inhibited by the allylamine antimycotic drugs. In terms of biological role, squalene epoxidase; part of the third module of ergosterol biosynthesis pathway that includes the late steps of the pathway. ERG1 catalyzes the epoxidation of squalene into 2,3-epoxysqualene. The third module or late pathway involves the ergosterol synthesis itself through consecutive reactions that mainly occur in the endoplasmic reticulum (ER) membrane. Firstly, the squalene synthase ERG9 catalyzes the condensation of 2 farnesyl pyrophosphate moieties to form squalene, which is the precursor of all steroids. Squalene synthase is crucial for balancing the incorporation of farnesyl diphosphate (FPP) into sterol and nonsterol isoprene synthesis. Secondly, the squalene epoxidase ERG1 catalyzes the stereospecific oxidation of squalene to (S)-2,3-epoxysqualene, which is considered to be a rate-limiting enzyme in steroid biosynthesis. Then, the lanosterol synthase ERG7 catalyzes the cyclization of (S)-2,3 oxidosqualene to lanosterol, a reaction that forms the sterol core. In the next steps, lanosterol is transformed to zymosterol through a complex process involving various demethylation, reduction and desaturation reactions. The lanosterol 14-alpha-demethylase ERG11 (also known as CYP51) catalyzes C14-demethylation of lanosterol to produce 4,4'-dimethyl cholesta-8,14,24-triene-3-beta-ol, which is critical for ergosterol biosynthesis. The C-14 reductase ERG24 reduces the C14=C15 double bond of 4,4-dimethyl-cholesta-8,14,24-trienol to produce 4,4-dimethyl-cholesta-8,24-dienol. 4,4-dimethyl-cholesta-8,24-dienol is substrate of the C-4 demethylation complex ERG25-ERG26-ERG27 in which ERG25 catalyzes the three-step monooxygenation required for the demethylation of 4,4-dimethyl and 4alpha-methylsterols, ERG26 catalyzes the oxidative decarboxylation that results in a reduction of the 3-beta-hydroxy group at the C-3 carbon to an oxo group, and ERG27 is responsible for the reduction of the keto group on the C-3. ERG28 has a role as a scaffold to help anchor ERG25, ERG26 and ERG27 to the endoplasmic reticulum and ERG29 regulates the activity of the iron-containing C4-methylsterol oxidase ERG25. Then, the sterol 24-C-methyltransferase ERG6 catalyzes the methyl transfer from S-adenosyl-methionine to the C-24 of zymosterol to form fecosterol. The C-8 sterol isomerase ERG2 catalyzes the reaction which results in unsaturation at C-7 in the B ring of sterols and thus converts fecosterol to episterol. The sterol-C5-desaturase ERG3 then catalyzes the introduction of a C-5 double bond in the B ring to produce 5-dehydroepisterol. The C-22 sterol desaturase ERG5 further converts 5-dehydroepisterol into ergosta-5,7,22,24(28)-tetraen-3beta-ol by forming the C-22(23) double bond in the sterol side chain. Finally, ergosta-5,7,22,24(28)-tetraen-3beta-ol is substrate of the C-24(28) sterol reductase ERG4 to produce ergosterol. The chain is Squalene epoxidase ERG1 from Saccharomyces cerevisiae (strain ATCC 204508 / S288c) (Baker's yeast).